The sequence spans 464 residues: Plant intracellular Ras-group-related LRR protein 3 (464 aa).

A coiled-coil region spans residues 106-138 (AAVVSLEEVHEGYEKQLRDLEEEIGRVYASAVE). LRR repeat units lie at residues 160-183 (GGVV…LGKI), 184-206 (VGLV…ISGL), 207-230 (EKLE…GLLL), 232-252 (LRIL…IAQC), 254-275 (SLVE…FGYG), 276-299 (LLNL…ICEM), 301-322 (SLRY…IGRL), 323-347 (TNLE…ISDL), 348-370 (ANLR…FFRL), and 372-393 (KLEK…MVNQ). Residues 398–406 (VREFMRKRW) carry the GVYW; degenerate motif.

This sequence belongs to the SHOC2 family. As to expression, widely expressed.

In terms of biological role, leucine-rich repeat protein that likely mediates protein interactions, possibly in the context of signal transduction. In Arabidopsis thaliana (Mouse-ear cress), this protein is Plant intracellular Ras-group-related LRR protein 3 (PIRL3).